We begin with the raw amino-acid sequence, 455 residues long: uncharacterized protein (455 aa).

11 helical membrane passes run 26-46 (FGPGVVALGIIAAVTLLQLLI), 53-73 (GAWGAIASMWLGVHLVPISIG), 77-97 (LGVMPLLPVLLMVWATARSTA), 111-131 (WVVASALGGPLLMAAIALAVI), 146-166 (ALRAFTSVLVVHSVGAATGVW), 191-211 (AAGVLALLGLSGVVTAGSLVV), 232-252 (LTVLSVLYAPNVIVGTSAIAV), 256-276 (AHIGFATFSSFAVLGGDIPAL), 278-298 (ILAAAPTPPLGPAWVALLIVG), 323-343 (LLVAAVAGALVMAVLGYGGGG), and 357-377 (ALVLGVLFWFTFVGWVTVVIA). The interval 384–455 (PKRLRPAPPV…LSDEPPPRAD (72 aa)) is disordered.

Its subcellular location is the cell membrane. This is an uncharacterized protein from Mycobacterium tuberculosis (strain CDC 1551 / Oshkosh).